A 262-amino-acid chain; its full sequence is Spindlin-Z (262 aa).

Positions 1–50 (MKTPFGKSPGQRSRADAGHAGVSASMMKKRTSHKKHRNNVGPSKPISQPR) are disordered. Residues 27–38 (MKKRTSHKKHRN) show a composition bias toward basic residues.

The protein belongs to the SPIN/STSY family. As to expression, expressed in several tissues including testis.

It is found in the nucleus. Functionally, may play a role in mitosis. This chain is Spindlin-Z (SPINZ), found in Gallus gallus (Chicken).